A 234-amino-acid chain; its full sequence is MNTKPILALDFPGEKEVFDFLKHFHEPLFVKIGMELYMQEGPDIVRKVKELGHDVFLDLKLHDIPNTVFSAMKGLAKLGVNLVNVHAAGGRPMMEAALEGLEAGTPVGKERPALIAVTQLTSTTEEQMQTEQRIALSLQESVLHYARLTKQAALQGVVCSVHEAKAIAEVCGEDFLRVTPGIRLAGGAAHDQKRIATPDGAKREGSSLIVVGRAVTGAQDPVAAYKIVSELWEA.

Residues aspartate 10, lysine 31, 58-67 (DLKLHDIPNT), threonine 121, arginine 183, glutamine 192, glycine 212, and arginine 213 contribute to the substrate site. Lysine 60 serves as the catalytic Proton donor.

The protein belongs to the OMP decarboxylase family. Type 1 subfamily. In terms of assembly, homodimer.

It catalyses the reaction orotidine 5'-phosphate + H(+) = UMP + CO2. The protein operates within pyrimidine metabolism; UMP biosynthesis via de novo pathway; UMP from orotate: step 2/2. Functionally, catalyzes the decarboxylation of orotidine 5'-monophosphate (OMP) to uridine 5'-monophosphate (UMP). This Lysinibacillus sphaericus (strain C3-41) protein is Orotidine 5'-phosphate decarboxylase.